Consider the following 413-residue polypeptide: Hemolin (413 aa).

Positions Met1–Leu19 are cleaved as a signal peptide. 4 consecutive Ig-like C2-type domains span residues Pro25–Ser112, Pro122–Val211, Pro233–Thr322, and Pro327–Asn413. Cystine bridges form between Cys46–Cys97, Cys140–Cys199, Cys252–Cys305, and Cys349–Cys395. The N-linked (GlcNAc...) asparagine glycan is linked to Asn283.

The protein belongs to the hemolin family. Hemolymph.

It is found in the secreted. It localises to the extracellular space. Insect-immune protein. Forms a protein complex at the bacterial surface. Can inhibit hemocyte aggregation. This chain is Hemolin, found in Hyalophora cecropia (Cecropia moth).